The sequence spans 418 residues: MGVVLITVVTVVDRHKALPNSSIDVDGHLWEFLSRQCFVLASEPLGIPIVVRSADLYRFSSSLLTLPKACRPIVRTRGATAIALDRNGVVYHEDRMGVSIEWLSVLSGYNHLNSSLIINQPYHLWVLGAADLCKPVFDLIPGPKRMVYAEIADEFHKSWQPPFVCGKLFETIPWTTVEHNHPLKLRAAGGEDTVVGECGFSKHSSNSLVRPPTVKRVIYAVVDPARLREIPAPGRPLPRRRPSEGGDARPEAALARSRARSVHGRRRDAAPPRGPAGARRPPGGRRDVDGTPTLGSVRPDIHTLKGRGLSPVPHLALWVEQWFLALQKPRLYTHHRLALHNIPSILKGEKREDTFEDNRRDELRHDDSRHRRHRGLPLRARSPPQCQPAPPRLGPHLRRSRGRGGRQLQRRGGAERRA.

Disordered stretches follow at residues 230–304 and 353–418; these read IPAP…IHTL and DTFE…ERRA. Residues 241 to 250 are compositionally biased toward basic and acidic residues; sequence RPSEGGDARP. Residues 257-266 are compositionally biased toward basic residues; that stretch reads SRARSVHGRR. Over residues 353-369 the composition is skewed to basic and acidic residues; sequence DTFEDNRRDELRHDDSR. Over residues 395 to 404 the composition is skewed to basic residues; sequence PHLRRSRGRG.

The protein belongs to the herpesviridae US2 family.

The protein is Gene 68 protein of Equine herpesvirus 1 (strain Ab4p) (EHV-1).